Consider the following 449-residue polypeptide: uncharacterized protein (449 aa).

It is found in the mitochondrion. This is an uncharacterized protein from Podospora anserina (strain S / ATCC MYA-4624 / DSM 980 / FGSC 10383) (Pleurage anserina).